The primary structure comprises 290 residues: UPF0761 membrane protein YihY (290 aa).

Topologically, residues 1–43 (MLKTVHQKAGRHTRPVRAWLKLLWQRIDEDNMTTLAGNLAYVS) are cytoplasmic. Residues 44–64 (LLSLVPLIAVVFALFAAFPMF) traverse the membrane as a helical segment. At 65 to 103 (SDVSIQLRHFIFANFMPATGDVIQRYIEQFVANSNKMTA) the chain is on the periplasmic side. A helical transmembrane segment spans residues 104–124 (VGACGLIVTALLLMYAIDSAL). Residues 125–139 (NTIWRSKRTRPKVYS) lie on the Cytoplasmic side of the membrane. Residues 140–160 (FAVYWMILTLGPLLAGVSLAI) form a helical membrane-spanning segment. Residues 161–179 (SSYLLSLRWASDLNTVIDN) lie on the Periplasmic side of the membrane. The chain crosses the membrane as a helical span at residues 180–200 (VLHILPLLLSWISFWLLYSIV). Over 201 to 209 (PTTRVPNRD) the chain is Cytoplasmic. Residues 210–230 (ALVGAFVAALLFEAGKKGFAL) form a helical membrane-spanning segment. Residues 231–243 (YITMFPSYQLIYG) lie on the Periplasmic side of the membrane. The helical transmembrane segment at 244-264 (VLAVIPILFVWVYWTWCIVLL) threads the bilayer. At 265–290 (GAEITVTLGEYRKLKQAAEQEEADQP) the chain is on the cytoplasmic side.

This sequence belongs to the UPF0761 family.

Its subcellular location is the cell inner membrane. This Salmonella typhimurium (strain LT2 / SGSC1412 / ATCC 700720) protein is UPF0761 membrane protein YihY.